We begin with the raw amino-acid sequence, 369 residues long: Cell division protein FtsZ (369 aa).

Residues 27-31 (GAGNN), 119-121 (GTG), E150, and N189 contribute to the GTP site.

Belongs to the FtsZ family. As to quaternary structure, homodimer. Polymerizes to form a dynamic ring structure in a strictly GTP-dependent manner. Interacts directly with several other division proteins.

Its subcellular location is the cytoplasm. In terms of biological role, essential cell division protein that forms a contractile ring structure (Z ring) at the future cell division site. The regulation of the ring assembly controls the timing and the location of cell division. One of the functions of the FtsZ ring is to recruit other cell division proteins to the septum to produce a new cell wall between the dividing cells. Binds GTP and shows GTPase activity. This chain is Cell division protein FtsZ, found in Mycoplasma genitalium (strain ATCC 33530 / DSM 19775 / NCTC 10195 / G37) (Mycoplasmoides genitalium).